Consider the following 350-residue polypeptide: Secreted effector protein PipB2 (350 aa).

Pentapeptide repeat domains follow at residues 162-201 (ANLTAENLCDADLSGANLEGAVLFMADCEGANFKGANLSG), 202-241 (TSLGDSNFKNACLEDGIMCGATLDHANLTGANLQHASLLG), 247-286 (CNCSGANMDHTNLSGATLIRADMSGATLQGATIMAAIMED), and 287-326 (AVLTRANLRKASFISTNLDGADLAEANLNNTCFKDCTLTH).

As to quaternary structure, interacts with the host kinesin light chain (KLC), a subunit of the kinesin-1 motor complex.

Its subcellular location is the secreted. The protein localises to the host membrane. Its function is as follows. Effector proteins function to alter host cell physiology and promote bacterial survival in host tissues. Involved in the reorganization of late endosome/lysosome (LE/Lys) compartments in mammalian cells. Necessary and sufficient to link kinesin-1 onto the Salmonella-containing vacuole (SCV) membrane. Required for centrifugal extension of lysosomal glycoprotein-rich membrane tubules, known as Salmonella-induced filaments (Sifs), away from the SCV and toward the cell periphery. Required for virulence, but not for intracellular survival and replication in phagocytic cells. The chain is Secreted effector protein PipB2 (pipB2) from Salmonella paratyphi A (strain ATCC 9150 / SARB42).